The chain runs to 380 residues: 1-deoxy-D-xylulose 5-phosphate reductoisomerase (380 aa).

NADPH contacts are provided by threonine 10, glycine 11, serine 12, isoleucine 13, glycine 36, arginine 37, asparagine 38, and asparagine 120. Lysine 121 contributes to the 1-deoxy-D-xylulose 5-phosphate binding site. Glutamate 122 lines the NADPH pocket. Aspartate 146 serves as a coordination point for Mn(2+). Residues serine 147, glutamate 148, serine 172, and histidine 195 each contribute to the 1-deoxy-D-xylulose 5-phosphate site. Glutamate 148 lines the Mn(2+) pocket. Position 201 (glycine 201) interacts with NADPH. 1-deoxy-D-xylulose 5-phosphate is bound by residues serine 208, asparagine 213, lysine 214, and glutamate 217. Residue glutamate 217 coordinates Mn(2+).

The protein belongs to the DXR family. Mg(2+) is required as a cofactor. Mn(2+) serves as cofactor.

The catalysed reaction is 2-C-methyl-D-erythritol 4-phosphate + NADP(+) = 1-deoxy-D-xylulose 5-phosphate + NADPH + H(+). The protein operates within isoprenoid biosynthesis; isopentenyl diphosphate biosynthesis via DXP pathway; isopentenyl diphosphate from 1-deoxy-D-xylulose 5-phosphate: step 1/6. Catalyzes the NADPH-dependent rearrangement and reduction of 1-deoxy-D-xylulose-5-phosphate (DXP) to 2-C-methyl-D-erythritol 4-phosphate (MEP). The protein is 1-deoxy-D-xylulose 5-phosphate reductoisomerase of Listeria welshimeri serovar 6b (strain ATCC 35897 / DSM 20650 / CCUG 15529 / CIP 8149 / NCTC 11857 / SLCC 5334 / V8).